Here is a 424-residue protein sequence, read N- to C-terminus: MNPLWQQYIQILNQVVKPALGCTEPIAAAYASAVARTLLGIVPEAISVQVSDNLYKNSMGVYVPGTGKIGLAIAAAAGAIAGNAEAGLEVLAAITPEQVAQAQDLIDAGKVKVERTETEEFIYCCVTLKAGEQEALVKICGGHTLIAEKRLNGEPVFTADNAQSAATGSICDGIDISIKSIYQFAQEVPFDQIKFILKASELNGKLSDEGMAKPYGLEVGRTMKSGIAAGIIGEDLLNKIVMLTAAASDARMGGANLPAMSNLGSGNQGIAATIPVVLTAQCYNVTEEKLARALIMSHLGAIYIKSHYPPLSAFCGNTVTSAAASMAMVYIAGGSFEQSCFAIQNVISDSSGMVCDGAKASCAMKVSTSSSAAVRSFLMALNSQNVSGQGIIATDVEKTIKNIGKMILNGMSSTDVTIIDIMST.

Belongs to the UPF0597 family.

The protein is UPF0597 protein Sputw3181_2955 of Shewanella sp. (strain W3-18-1).